A 1906-amino-acid polypeptide reads, in one-letter code: MIEDKGPRVTDYFVVAGLTDTSTLLDQEINRTDTNSIGPKAPITDIAVIIKSAGETVPEGYTCVEATPSALQANLNYGSLKSPELFLCYRRGRDKPPLTDIGVLYEGKERLMPGCEVIQATPYGRCANVNNSSTTSQRIFITYRRAPPVRSQNSLAVTDICVIITSKGETPPHTFCKVDKNLNCGMWGSNVFLCYKKSVPASNAIAYKAGLIFRYPEEDYESFPLSPSVPLFCLPMGATIECWDPQIKYPLPVFSTFVLTGSSAEKVYGAAIQFYEPYSQERLTEKQLTQLGLLTLVEKRVVSKPINSNKCICLLSHWPFFEAFKNFLMFIYKVSVSGPHPLPIEKHISHFMQNIPFPSPQRPRILIQLSVHDAFILSQPVSTPLPLSGANFSSLLMNLGPENCATLLLLVLLESKILLHSLRPAVLTGVAEAVVAMIFPFQWQCPYIPLCPLSLAGVLSAPLPFIVGVDSRYFDLHDPPQDVVCIDLDTNTLYVADERKNINWKQLPKRPCKSLLGTLRRLYQQLCSVHRKPQESSAIEMTPIEADYSWQKKMTQLEMEIQETFLRFMASILKGYRSYLRPITEAPSNKATAADSLFDRQGFLKSRDRAYTKFYTLLSKTQIFIRFIEECSFVSDKDTGLAFFDDCIEKLFPDKGVERTEKVDLDSAEDTRLIELDDSQRSEHTVFIMPPEPPPDDGNNLSPQYSYTYFPRLDLKLFDSPQKLKLCFNRHPPGSSITNSPALMAKRTKQEIKTAHKLAKRCYTNPPQWAKYLFSHCYSLWFICLPAYVRVSHPKVRALQQAHDVLVKMRKTDVDPLDEVCYRVVMQLCGLWVNPVLAVRVLFEMKTARIKPNAITYGYYNKVVLESPWPSSTRSGIFLWTKVRNVVHGLAQFRQPLKKTGQKSQVFSISGGQSDQGYGSKDELVKEGADGHAPEEHTPPELTTTELHIEEECDISAIVSKHLQPTPEPQSPTEPPAWGSSIVKVPSGLFDTNNRTSTGSTSTVLFSTQAPVEDAVFSEVTNFKKNGDRGEKKQKHFPERSCSFSSESRAGMLLKKSSLDLNSSEMAIMMGADAKILTAALTCPKTSPPHVTRTHSFENVNCHLADSRTRMSEGTRDSEHRSSPVLEMLEESQELLEPVVGDNVAETAAEMTCNSLQSNSHSDQSRDTQAGAQDPVNKRSSSYATRKAIEREDVETGLDPLSLLATECVEKTSDSEDKLFSPVISRNLADEIESYMNLKSPLGSKSCSMELHGEGNQEPGSPAVFAHPLERSSSLPSDRGPPARDSTETEKSSPAVSSSKTLTGRFKPQSPYRAYKDRSTSLSALVRSSPNSSLGSVVNSLSGLKLDNILSGPKIDVLKSSMKQAATVASKMWVAVASAYSYSDDEEETNKDYSFPAGLEDHHIVGETLSPNTSVSGLVPSELTQSNTSLGSSSSSGDVGKLQCPAGEVPFSRNIKGQDFEKSDHGSSQNTSMSSIYQNCAMEVLMSSCSQCRACGALVYDEEIMAGWTADDSNLNTTCPFCKSNFLPLLNVEFKDLRGSASFFLKPSTSGDSLQSGSIPSASEPSEHKPTSSSAEPDLISFMDFSKHSETITEEASYTVESSDEIKKTNGDVQSVKMSSVPNSLSKRNVSLTRSHSVGGPLQNIDFSQRPFHGVSTVSLPSSLQEDVDHLGKRPSPPPVSVPYLSPLVLRKELESLLENEGDQVIHTSSFINQHPIIFWNLVWYFRRLDLPSNLPGLILTSEHCNGGVQLPLSSLSQDSKLVYIQLLWDNINLHQEPGEPLYVSWRNLNSEKKPSLLSEQQQAASALVETIRQSIQQNDVLKPINLLSQQMKPGTKRQRSLYREILFLSLVSLGRENIDIEAFDNEYGLAYRSLPSESLERLQRIDAPPSISVEWCRKCFGAPLI.

Residues 40 to 199 enclose the MABP domain; that stretch reads KAPITDIAVI…NVFLCYKKSV (160 aa). Residues 191 to 363 form the uDENN domain; it reads VFLCYKKSVP…NIPFPSPQRP (173 aa). Positions 384–520 constitute a cDENN domain; the sequence is PLPLSGANFS…PCKSLLGTLR (137 aa). In terms of domain architecture, dDENN spans 522 to 640; it reads LYQQLCSVHR…CSFVSDKDTG (119 aa). 3 positions are modified to phosphoserine: Ser-702, Ser-736, and Ser-740. A PPR repeat occupies 818-852; that stretch reads DEVCYRVVMQLCGLWVNPVLAVRVLFEMKTARIKP. Residues 904–917 show a composition bias toward polar residues; sequence SQVFSISGGQSDQG. 2 disordered regions span residues 904–942 and 963–984; these read SQVF…PPEL and LQPT…SIVK. The span at 920 to 939 shows a compositional bias: basic and acidic residues; the sequence is SKDELVKEGADGHAPEEHTP. Thr-966 is modified (phosphothreonine). Residues 966 to 975 show a composition bias toward pro residues; it reads TPEPQSPTEP. Ser-971 bears the Phosphoserine mark. At Thr-973 the chain carries Phosphothreonine. Ser-987, Ser-1000, Ser-1043, Ser-1058, Ser-1096, and Ser-1123 each carry phosphoserine. Over residues 1154–1171 the composition is skewed to polar residues; it reads NSLQSNSHSDQSRDTQAG. Positions 1154–1184 are disordered; it reads NSLQSNSHSDQSRDTQAGAQDPVNKRSSSYA. Residues Ser-1181, Ser-1221, Ser-1240, Ser-1248, and Ser-1274 each carry the phosphoserine modification. A disordered region spans residues 1246-1317; that stretch reads SCSMELHGEG…PQSPYRAYKD (72 aa). A compositionally biased stretch (basic and acidic residues) spans 1281 to 1291; it reads PPARDSTETEK. The segment covering 1292 to 1302 has biased composition (polar residues); that stretch reads SSPAVSSSKTL. Phosphoserine occurs at positions 1321, 1333, and 1342. 3 disordered regions span residues 1410-1440, 1548-1577, and 1596-1628; these read SPNT…GDVG, STSG…SAEP, and ASYT…LSKR. Residues 1423–1437 show a composition bias toward low complexity; it reads LTQSNTSLGSSSSSG. Composition is skewed to polar residues over residues 1548-1564 and 1611-1628; these read STSG…SASE and GDVQ…LSKR. A phosphoserine mark is found at Ser-1620, Ser-1624, Ser-1626, Ser-1637, and Ser-1796.

In terms of processing, phosphorylated in response to insulin.

It is found in the cytoplasmic vesicle membrane. It localises to the cell membrane. The protein resides in the cytoplasm. The protein localises to the cytosol. In terms of biological role, guanine nucleotide exchange factor (GEF) activating RAB10. Promotes the exchange of GDP to GTP, converting inactive GDP-bound RAB10 into its active GTP-bound form. Thereby, stimulates SLC2A4/GLUT4 glucose transporter-enriched vesicles delivery to the plasma membrane in response to insulin. The sequence is that of DENN domain-containing protein 4C (Dennd4c) from Mus musculus (Mouse).